The chain runs to 148 residues: Endothelial differentiation-related factor 1 (148 aa).

Alanine 2 carries the post-translational modification N-acetylalanine. Position 4 is a phosphoserine (serine 4). Position 25 is an N6-methyllysine (lysine 25). The disordered stretch occupies residues 34–67; sequence RGEDVETSKKWAAGQNKQHSITKNTAKLDRETEE. Residues 37–113 are interaction with NR5A2, PPARG and NR1H3; the sequence is DVETSKKWAA…QVIADYESGR (77 aa). Residues 48–58 are compositionally biased toward polar residues; the sequence is QNKQHSITKNT. Positions 69–108 are interaction with TBP and NR5A1; the sequence is HHDRVTLEVGKVIQRGRQSKGLTQKDLATKINEKPQVIAD. The short motif at 81–88 is the IQ motif element; the sequence is IQRGRQSK. An HTH cro/C1-type domain is found at 81-135; it reads IQRGRQSKGLTQKDLATKINEKPQVIADYESGRAIPNNQVLGKIERAIGLKLRGK. Positions 92-111 form a DNA-binding region, H-T-H motif; the sequence is QKDLATKINEKPQVIADYES.

In terms of assembly, interacts with TBP and the transcription factor IID (TFIID) complex, NR5A2, NR1H3 and PPARG. Interaction with TBP is regulated by phosphorylation. Binds NR5A1, ATF1, FOS and JUN via their conserved basic region. Binding to calmodulin is regulated by calcium and phosphorylation of the IQ motif. Phosphorylated. In terms of tissue distribution, expressed in brain, liver, kidney and heart (at protein level). Also expressed in testis.

The protein resides in the cytoplasm. It is found in the nucleus. Its function is as follows. Transcriptional coactivator stimulating NR5A1 and ligand-dependent NR1H3/LXRA and PPARG transcriptional activities. Enhances the DNA-binding activity of ATF1, ATF2, CREB1 and NR5A1. Regulates nitric oxid synthase activity probably by sequestering calmodulin in the cytoplasm. Might function in endothelial cells differentiation, hormone-induced cardiomyocytes hypertrophy and lipid metabolism. In Mus musculus (Mouse), this protein is Endothelial differentiation-related factor 1 (Edf1).